The chain runs to 860 residues: Leucine--tRNA ligase (860 aa).

Residues 42–52 (PYPSGRLHMGH) carry the 'HIGH' region motif. Positions 619–623 (KMSKS) match the 'KMSKS' region motif. K622 provides a ligand contact to ATP.

The protein belongs to the class-I aminoacyl-tRNA synthetase family.

Its subcellular location is the cytoplasm. The enzyme catalyses tRNA(Leu) + L-leucine + ATP = L-leucyl-tRNA(Leu) + AMP + diphosphate. This chain is Leucine--tRNA ligase, found in Cronobacter sakazakii (strain ATCC BAA-894) (Enterobacter sakazakii).